Here is a 353-residue protein sequence, read N- to C-terminus: Aromatic amino acid aminotransferase (353 aa).

Lysine 217 is modified (N6-(pyridoxal phosphate)lysine).

Belongs to the class-II pyridoxal-phosphate-dependent aminotransferase family. Homodimer. Requires pyridoxal 5'-phosphate as cofactor.

The enzyme catalyses an aromatic L-alpha-amino acid + 2-oxoglutarate = an aromatic oxo-acid + L-glutamate. Aminotransferase that catalyzes the conversion of aromatic amino acids and 2-oxoglutarate into corresponding aromatic oxo acids and L-glutamate. The chain is Aromatic amino acid aminotransferase from Mycobacterium bovis (strain ATCC BAA-935 / AF2122/97).